Consider the following 379-residue polypeptide: RING finger protein 215 (379 aa).

Disordered stretches follow at residues 1-21 (MGSA…PPSP) and 44-63 (AADG…RSVR). The Cytoplasmic portion of the chain corresponds to 1–24 (MGSADRPALRSPSLPPPPPSPPSP). A helical membrane pass occupies residues 25-45 (LLLLLPLLPLWLGLMGPGAAA). Over 46–252 (DGSEPATGEG…GGAQAQEQKP (207 aa)) the chain is Extracellular. N-linked (GlcNAc...) asparagine glycosylation occurs at N188. A helical membrane pass occupies residues 253 to 273 (LQQLWNAILLVAMLLCTGLVV). The Cytoplasmic portion of the chain corresponds to 274 to 379 (QAQRQASRQN…NVLGNHYSDD (106 aa)). The segment at 327-368 (CAVCLDYFCNKQWLRVLPCKHEFHRDCVDPWLMLQQTCPLCK) adopts an RING-type; atypical zinc-finger fold.

Its subcellular location is the membrane. This Mus musculus (Mouse) protein is RING finger protein 215 (Rnf215).